A 142-amino-acid polypeptide reads, in one-letter code: Acidic phospholipase A2 Bc-PL (142 aa).

The N-terminal stretch at 1-9 is a signal peptide; the sequence is AVCVSLLGA. Residues 10 to 17 constitute a propeptide that is removed on maturation; the sequence is ANIPPQPL. 7 disulfide bridges follow: Cys-28–Cys-94, Cys-44–Cys-141, Cys-46–Cys-62, Cys-61–Cys-122, Cys-68–Cys-115, Cys-78–Cys-108, and Cys-101–Cys-113. Residues Tyr-45, Gly-47, and Gly-49 each contribute to the Ca(2+) site. His-65 is a catalytic residue. Asp-66 is a binding site for Ca(2+). Residue Asp-116 is part of the active site.

The protein belongs to the phospholipase A2 family. Group I subfamily. D49 sub-subfamily. The cofactor is Ca(2+). As to expression, expressed by the venom gland.

Its subcellular location is the secreted. The enzyme catalyses a 1,2-diacyl-sn-glycero-3-phosphocholine + H2O = a 1-acyl-sn-glycero-3-phosphocholine + a fatty acid + H(+). Functionally, PLA2 catalyzes the calcium-dependent hydrolysis of the 2-acyl groups in 3-sn-phosphoglycerides. The protein is Acidic phospholipase A2 Bc-PL of Bungarus candidus (Malayan krait).